The following is a 365-amino-acid chain: DNA replication and repair protein RecF (365 aa).

30–37 (GANGQGKT) provides a ligand contact to ATP.

Belongs to the RecF family.

The protein resides in the cytoplasm. The RecF protein is involved in DNA metabolism; it is required for DNA replication and normal SOS inducibility. RecF binds preferentially to single-stranded, linear DNA. It also seems to bind ATP. The chain is DNA replication and repair protein RecF from Geobacter metallireducens (strain ATCC 53774 / DSM 7210 / GS-15).